The primary structure comprises 354 residues: Histone-lysine N-methyltransferase SUVR3 (354 aa).

The region spanning 143 to 188 is the Pre-SET domain; it reads SGCECERCEEGYCKCLAFAGMEEIANECGSGCGCGSDCSNRVTQKG. Positions 145, 147, 150, 155, 157, 170, 174, 176, and 180 each coordinate Zn(2+). The region spanning 191 to 323 is the SET domain; sequence VSLKIVRDEK…AEEELSFSYG (133 aa). S-adenosyl-L-methionine contacts are provided by residues 201–203 and 281–282; these read KGW and NH. Zn(2+) is bound at residue Cys-284. Tyr-322 contacts S-adenosyl-L-methionine. Residues 334 to 350 form the Post-SET domain; sequence DKLNCSCGSSCCLGTLP. Residues Cys-338, Cys-340, and Cys-345 each contribute to the Zn(2+) site.

The protein belongs to the class V-like SAM-binding methyltransferase superfamily.

Its subcellular location is the nucleus. The protein resides in the chromosome. It catalyses the reaction L-lysyl-[histone] + S-adenosyl-L-methionine = N(6)-methyl-L-lysyl-[histone] + S-adenosyl-L-homocysteine + H(+). Functionally, histone methyltransferase. This is Histone-lysine N-methyltransferase SUVR3 (SUVR3) from Arabidopsis thaliana (Mouse-ear cress).